Consider the following 61-residue polypeptide: Bacteriocin mesentericin Y105 (61 aa).

The first 24 residues, 1 to 24 (MTNMKSVEAYQQLDNQNLKKVVGG), serve as a signal peptide directing secretion. Cys33 and Cys38 are disulfide-bonded.

This sequence belongs to the bacteriocin class IIA/YGNGV family.

The protein localises to the secreted. Bacteriocin active against Listeria monocytogenes. The chain is Bacteriocin mesentericin Y105 (mesY) from Leuconostoc mesenteroides.